A 105-amino-acid chain; its full sequence is Small ribosomal subunit protein eS26 (105 aa).

This sequence belongs to the eukaryotic ribosomal protein eS26 family. In terms of assembly, component of the small ribosomal subunit.

It localises to the cytoplasm. This Encephalitozoon cuniculi (strain GB-M1) (Microsporidian parasite) protein is Small ribosomal subunit protein eS26 (RPS26).